Consider the following 148-residue polypeptide: UPF0178 protein BH16190 (148 aa).

Belongs to the UPF0178 family.

This is UPF0178 protein BH16190 from Bartonella henselae (strain ATCC 49882 / DSM 28221 / CCUG 30454 / Houston 1) (Rochalimaea henselae).